Reading from the N-terminus, the 684-residue chain is Actin-related protein 5 (684 aa).

A coiled-coil region spans residues 262–469 (KEKSVIIQLP…ARQKQKQKAN (208 aa)). 2 disordered regions span residues 392-443 (KEKK…PEHY) and 481-500 (VNPT…EDPE). Basic and acidic residues predominate over residues 402 to 443 (SMKDGRLAQKRKRDEEKEKEKEKEEERDRQEEESFLKDPEHY).

This sequence belongs to the actin family. ARP5 subfamily. In terms of assembly, component of the chromatin-remodeling Ino80 complex.

The protein resides in the nucleus. Functionally, proposed core component of the chromatin remodeling Ino80 complex which is involved in transcriptional regulation, DNA replication and probably DNA repair. The sequence is that of Actin-related protein 5 (arpE) from Dictyostelium discoideum (Social amoeba).